The primary structure comprises 241 residues: Demethylmenaquinone methyltransferase (241 aa).

S-adenosyl-L-methionine is bound by residues Thr-60, Asp-81, and 106 to 107 (DA).

Belongs to the class I-like SAM-binding methyltransferase superfamily. MenG/UbiE family.

It carries out the reaction a 2-demethylmenaquinol + S-adenosyl-L-methionine = a menaquinol + S-adenosyl-L-homocysteine + H(+). The protein operates within quinol/quinone metabolism; menaquinone biosynthesis; menaquinol from 1,4-dihydroxy-2-naphthoate: step 2/2. Methyltransferase required for the conversion of demethylmenaquinol (DMKH2) to menaquinol (MKH2). The chain is Demethylmenaquinone methyltransferase from Staphylococcus epidermidis (strain ATCC 35984 / DSM 28319 / BCRC 17069 / CCUG 31568 / BM 3577 / RP62A).